A 757-amino-acid polypeptide reads, in one-letter code: Amine oxidase [copper-containing] 2 (757 aa).

Over 1-4 (MNLK) the chain is Cytoplasmic. Residues 5 to 25 (VLLLLLGLSFLTVFALVYVLL) traverse the membrane as a helical segment. The Extracellular segment spans residues 26–757 (TRQGSFSQSP…NLPSFSYEGL (732 aa)). N-linked (GlcNAc...) asparagine glycans are attached at residues N133, N198, and N226. The active-site Proton acceptor is D381. A disulfide bridge links C399 with C425. Catalysis depends on Y466, which acts as the Schiff-base intermediate with substrate; via topaquinone. Y466 is modified (2',4',5'-topaquinone). H517 and H519 together coordinate Cu(2+). Residues D526, L527, D528, E569, E638, F660, and N662 each contribute to the Ca(2+) site. N663 is a glycosylation site (N-linked (GlcNAc...) asparagine). Residues E664, D670, and L671 each contribute to the Ca(2+) site. Cu(2+) is bound at residue H681. C731 and C738 are disulfide-bonded.

This sequence belongs to the copper/topaquinone oxidase family. Homodimer; disulfide-linked. Probably forms heterodimers with AOC3. Cu(2+) is required as a cofactor. It depends on Ca(2+) as a cofactor. Requires L-topaquinone as cofactor. Post-translationally, topaquinone (TPQ) is generated by copper-dependent autoxidation of a specific tyrosyl residue. In terms of tissue distribution, significantly much highly expressed in retina.

The protein localises to the cell membrane. It catalyses the reaction 2-phenylethylamine + O2 + H2O = 2-phenylacetaldehyde + H2O2 + NH4(+). The enzyme catalyses tryptamine + O2 + H2O = indole-3-acetaldehyde + H2O2 + NH4(+). It carries out the reaction tyramine + O2 + H2O = (4-hydroxyphenyl)acetaldehyde + H2O2 + NH4(+). In terms of biological role, catalyzes the oxidative deamination of primary amines to the corresponding aldehydes with the concomitant production of hydrogen peroxide and ammonia. Has a preference for 2-phenylethylamine, tryptamine and tyramine. Could also act on methylamine and benzylamine but much less efficiently. The polypeptide is Amine oxidase [copper-containing] 2 (Mus musculus (Mouse)).